The following is a 211-amino-acid chain: 2,3-bisphosphoglycerate-dependent phosphoglycerate mutase (211 aa).

Substrate-binding positions include 9 to 16, 22 to 23, arginine 61, 88 to 91, lysine 99, 115 to 116, and 159 to 160; these read RHGQSEWN, TG, ERDY, RR, and GN. Histidine 10 serves as the catalytic Tele-phosphohistidine intermediate. Glutamate 88 functions as the Proton donor/acceptor in the catalytic mechanism.

The protein belongs to the phosphoglycerate mutase family. BPG-dependent PGAM subfamily. Homodimer.

It catalyses the reaction (2R)-2-phosphoglycerate = (2R)-3-phosphoglycerate. The protein operates within carbohydrate degradation; glycolysis; pyruvate from D-glyceraldehyde 3-phosphate: step 3/5. In terms of biological role, catalyzes the interconversion of 2-phosphoglycerate and 3-phosphoglycerate. This chain is 2,3-bisphosphoglycerate-dependent phosphoglycerate mutase, found in Sinorhizobium fredii (strain NBRC 101917 / NGR234).